The primary structure comprises 47 residues: PhoP/PhoQ regulator MgrB (47 aa).

A helical transmembrane segment spans residues 6–26 (WAILLAVLVACLLLWMQTLNV).

The protein belongs to the MgrB family. In terms of assembly, may form homooligomers. Probably interacts with the periplasmic domain of PhoQ.

Its subcellular location is the cell inner membrane. Its function is as follows. PhoP-regulated transcription is redox-sensitive, being activated when the periplasm becomes more reducing. MgrB acts between DsbA/DsbB and PhoP/PhoQ in this pathway. Represses PhoP/PhoQ signaling, possibly by binding to the periplasmic domain of PhoQ, altering its activity and that of downstream effector PhoP. The protein is PhoP/PhoQ regulator MgrB of Cronobacter sakazakii (strain ATCC BAA-894) (Enterobacter sakazakii).